We begin with the raw amino-acid sequence, 267 residues long: MTQVSMRDLFEAGAHFGHRARFWNPKMAPYIYGKRGDIHIINLEQTVPMLNDALNFLSAVVGNGGRVMFVGTKRSASDAISEAASRCGMPYVNFRWLGGMMTNFKTIRQSIRRLEEIEKMAEDGTYDKLSKKEVIVLEREREKLARALTGIRSMKHLPDVLFVVDVGHERIAIQEAMKLGIPVVGVVDTNNDIEGVDYIIPGNDDSVRAIRLYVNAAADTIEHAKAAAAVRGGDNAEEELAEAISQEEPSAAEELPDDMADNENEFE.

The interval 234-267 is disordered; it reads DNAEEELAEAISQEEPSAAEELPDDMADNENEFE. The segment covering 250-267 has biased composition (acidic residues); the sequence is SAAEELPDDMADNENEFE.

This sequence belongs to the universal ribosomal protein uS2 family.

This is Small ribosomal subunit protein uS2 from Dichelobacter nodosus (strain VCS1703A).